The chain runs to 328 residues: MSSKVPFPPRLPLPSSHLPLTLISLEDWALVTLNGADTVKYLQGQLTCDVASLDADRFSFAAHCDAKGKMFSHLCVFHHHDGMAFIERRSVRDSQLAELKKYAVFSKTTITADDDAVLLGVAGFQAQAALGGLFTSVPNAAHPVAHHQDTTLLYFSLPAPRFLLITTPAVRDALQHKLEGQAQLNDSQQWLALDIEAGYPVIDSANGTQFIPQAANVQALDGISFNKGCYAGQEMVARAKYRGANKRALYWLAGKASHPPAAGDDLELKMGDNWRRTGTVLAACQLEDGSVWVQAVLNNDLASDSLLHVRDDSAGALSVQPLPYAIGE.

Residues Trp28 and Trp190 each coordinate folate.

This sequence belongs to the tRNA-modifying YgfZ family.

Its subcellular location is the cytoplasm. In terms of biological role, folate-binding protein involved in regulating the level of ATP-DnaA and in the modification of some tRNAs. It is probably a key factor in regulatory networks that act via tRNA modification, such as initiation of chromosomal replication. The protein is tRNA-modifying protein YgfZ of Sodalis glossinidius (strain morsitans).